Reading from the N-terminus, the 702-residue chain is Polyribonucleotide nucleotidyltransferase (702 aa).

Mg(2+)-binding residues include Asp-485 and Asp-491. The KH domain occupies 552 to 611 (PRITTLKINPEKIRDVIGKGGATIRALTEETGTTIELEDDGTVKIASANGEATKEAIRRI). The region spanning 621–689 (GTVYNGKVVR…RQGRVRLSMK (69 aa)) is the S1 motif domain.

This sequence belongs to the polyribonucleotide nucleotidyltransferase family. Component of the RNA degradosome, which is a multiprotein complex involved in RNA processing and mRNA degradation. Mg(2+) is required as a cofactor.

Its subcellular location is the cytoplasm. The catalysed reaction is RNA(n+1) + phosphate = RNA(n) + a ribonucleoside 5'-diphosphate. Its function is as follows. Involved in mRNA degradation. Catalyzes the phosphorolysis of single-stranded polyribonucleotides processively in the 3'- to 5'-direction. The chain is Polyribonucleotide nucleotidyltransferase from Shewanella woodyi (strain ATCC 51908 / MS32).